A 454-amino-acid chain; its full sequence is Cysteine--tRNA ligase (454 aa).

C27 is a Zn(2+) binding site. A 'HIGH' region motif is present at residues 29–39 (PTVQDHFHIGH). Residues D207, H232, and E236 each contribute to the Zn(2+) site. The 'KMSKS' region signature appears at 265 to 269 (KMSKS). K268 is an ATP binding site.

It belongs to the class-I aminoacyl-tRNA synthetase family. Requires Zn(2+) as cofactor.

Its subcellular location is the cytoplasm. It carries out the reaction tRNA(Cys) + L-cysteine + ATP = L-cysteinyl-tRNA(Cys) + AMP + diphosphate. The protein is Cysteine--tRNA ligase of Thermoplasma volcanium (strain ATCC 51530 / DSM 4299 / JCM 9571 / NBRC 15438 / GSS1).